Here is a 497-residue protein sequence, read N- to C-terminus: Serine/threonine protein phosphatase 2A 57 kDa regulatory subunit B' epsilon isoform (497 aa).

The interval 12 to 71 (KFNKSDQHHQDNNNNNNNTSTNTVVRGSRTTTPAPSSVSNGESQTTAQSPSQTPNHPMFT) is disordered. Low complexity predominate over residues 23–34 (NNNNNNNTSTNT). The segment covering 35 to 71 (VVRGSRTTTPAPSSVSNGESQTTAQSPSQTPNHPMFT) has biased composition (polar residues).

The protein belongs to the phosphatase 2A regulatory subunit B56 family. PP2A consists of a common heteromeric enzyme, composed of a catalytic subunit (subunits C), a constant regulatory subunit (subunit A), and a variety of regulatory subunits such as subunits B (the R2/B/PR55/B55, R3/B''/PR72/PR130/PR59 and R5/B'/B56 families). In terms of tissue distribution, expressed ubiquitously.

It is found in the cytoplasm. Its function is as follows. The B regulatory subunit may modulate substrate selectivity and catalytic activity, and may also direct the localization of the catalytic enzyme to a particular subcellular compartment. This Arabidopsis thaliana (Mouse-ear cress) protein is Serine/threonine protein phosphatase 2A 57 kDa regulatory subunit B' epsilon isoform (B'EPSILON).